A 149-amino-acid polypeptide reads, in one-letter code: Nucleoside diphosphate kinase (149 aa).

Positions 9, 57, 85, 91, 102, and 112 each coordinate ATP. His115 (pros-phosphohistidine intermediate) is an active-site residue.

Belongs to the NDK family. Homotetramer. The cofactor is Mg(2+).

It is found in the cytoplasm. The catalysed reaction is a 2'-deoxyribonucleoside 5'-diphosphate + ATP = a 2'-deoxyribonucleoside 5'-triphosphate + ADP. It catalyses the reaction a ribonucleoside 5'-diphosphate + ATP = a ribonucleoside 5'-triphosphate + ADP. Functionally, major role in the synthesis of nucleoside triphosphates other than ATP. The ATP gamma phosphate is transferred to the NDP beta phosphate via a ping-pong mechanism, using a phosphorylated active-site intermediate. The sequence is that of Nucleoside diphosphate kinase from Desulforamulus reducens (strain ATCC BAA-1160 / DSM 100696 / MI-1) (Desulfotomaculum reducens).